Here is a 707-residue protein sequence, read N- to C-terminus: Elongation factor G 2 (707 aa).

The tr-type G domain occupies 8–290 (ERYRNIGISA…AVIDYLPSPA (283 aa)). Residues 17–24 (AHIDAGKT), 88–92 (DTPGH), and 142–145 (NKMD) each bind GTP.

This sequence belongs to the TRAFAC class translation factor GTPase superfamily. Classic translation factor GTPase family. EF-G/EF-2 subfamily.

The protein localises to the cytoplasm. Functionally, catalyzes the GTP-dependent ribosomal translocation step during translation elongation. During this step, the ribosome changes from the pre-translocational (PRE) to the post-translocational (POST) state as the newly formed A-site-bound peptidyl-tRNA and P-site-bound deacylated tRNA move to the P and E sites, respectively. Catalyzes the coordinated movement of the two tRNA molecules, the mRNA and conformational changes in the ribosome. The protein is Elongation factor G 2 of Bordetella bronchiseptica (strain ATCC BAA-588 / NCTC 13252 / RB50) (Alcaligenes bronchisepticus).